The following is a 237-amino-acid chain: Probable transcriptional regulatory protein Mfl546 (237 aa).

Residues 1-20 (MGRAHEVRAASMAKTAAKKS) form a disordered region. Residues 9–20 (AASMAKTAAKKS) are compositionally biased toward low complexity.

It belongs to the TACO1 family.

The protein resides in the cytoplasm. This Mesoplasma florum (strain ATCC 33453 / NBRC 100688 / NCTC 11704 / L1) (Acholeplasma florum) protein is Probable transcriptional regulatory protein Mfl546.